Here is a 1581-residue protein sequence, read N- to C-terminus: Maestro heat-like repeat-containing protein family member 2B (1581 aa).

16 HEAT repeats span residues 123-160 (FMMMTLLTMQTMLRLVEDENMRQTFCIALENFSKSIYK), 305-342 (ANPVDLLDFFDEQIRSTNEAVRTGILTLLRSTINAEEP), 401-441 (MSNR…LVIG), 464-501 (DYLFNIIRILIMAEEKKKRDIQESTALVVSTGAVKLPS), 526-543 (AIGLLKIMPEIIHPKLAE), 544-580 (MWKTRMPALLQPLEGSNASIVLWETMLLQLLKESLWK), 658-695 (ENHLDIVLNVLKTFQDKEKFFVNRCKGIFSGKKSLTKT), 773-815 (TYKE…LKPA), 960-997 (CQEVDRLQGLQEGLDSEDEQVQIKISSKIAKIVCKFIP), 1017-1055 (PLCTKACGIWMIAALKEHGALLEDQLLEILSTIYHHMPV), 1112-1150 (KLMRALIKKLVARLEDDIAGTEAISVACAIYEVILTGAH), 1153-1191 (HLYPELFTLLLKLVSCSLGQKMPMSTLSQRRRVMQLGER), 1254-1291 (GVILDIMEHLLSSLTSSSENYRITGMAFFSELMKEPIL), 1295-1332 (GNLRDVLIFMDQNARDSNAILRQMAIRGLGNTACGAPH), 1359-1379 (CESLKALKKILELLTERDINF), and 1380-1416 (YFKEIVLQTRTFFEDEQDDVRLTAISLFEDLATLTGR).

Found in a complex at least composed of MROH2B isoform 2, PRKACA isoform 2 and TCP11. Interacts with PRKACA isoform 2. Interacts with TCP11. Post-translationally, constitutively phosphorylated on serine and threonine residues in acrosomal region of the sperm head, midpiece and flagellar regions of noncapacitated spermatozoa. Phosphorylation on tyrosine residues increases upon sperm capacitation within the acrosomal and tail regions in a protein kinase A (PKA)-dependent signaling pathway. In terms of tissue distribution, expressed strongly in round spermatids and fully mature spermatozoa. Expressed weakly in pachytene spermatocytes (at protein level). Isoform 2 is specifically expressed in the testis. Isoform 2 is expressed in pachytene spermatocytes and round spermatids. Isoform 3 is weakly expressed in testis.

The protein resides in the cytoplasm. It localises to the cytoplasmic vesicle. The protein localises to the secretory vesicle. Its subcellular location is the acrosome. It is found in the cell projection. The protein resides in the cilium. It localises to the flagellum. May play a role in the process of sperm capacitation. The polypeptide is Maestro heat-like repeat-containing protein family member 2B (Mus musculus (Mouse)).